The chain runs to 502 residues: Glutamate--tRNA ligase (502 aa).

A 'HIGH' region motif is present at residues 9–19; it reads PSPTGDPHVGT. Residues Cys-106, Cys-108, Cys-133, and His-135 each coordinate Zn(2+). The 'KMSKS' region motif lies at 250–254; the sequence is KLSKR. Lys-253 is an ATP binding site.

It belongs to the class-I aminoacyl-tRNA synthetase family. Glutamate--tRNA ligase type 1 subfamily. As to quaternary structure, monomer. The cofactor is Zn(2+).

It is found in the cytoplasm. It carries out the reaction tRNA(Glu) + L-glutamate + ATP = L-glutamyl-tRNA(Glu) + AMP + diphosphate. Catalyzes the attachment of glutamate to tRNA(Glu) in a two-step reaction: glutamate is first activated by ATP to form Glu-AMP and then transferred to the acceptor end of tRNA(Glu). This chain is Glutamate--tRNA ligase, found in Protochlamydia amoebophila (strain UWE25).